We begin with the raw amino-acid sequence, 449 residues long: Glycine--tRNA ligase (449 aa).

The substrate site is built by Arg-100 and Glu-158. ATP-binding positions include 190–192 (RNE), 200–205 (FRVREF), 275–276 (EL), and 319–322 (GIER). Residue 205 to 209 (FEQFE) coordinates substrate. Residue 315–319 (EPSVG) coordinates substrate.

This sequence belongs to the class-II aminoacyl-tRNA synthetase family. In terms of assembly, homodimer.

Its subcellular location is the cytoplasm. The catalysed reaction is tRNA(Gly) + glycine + ATP = glycyl-tRNA(Gly) + AMP + diphosphate. Catalyzes the attachment of glycine to tRNA(Gly). This is Glycine--tRNA ligase from Mycoplasma pneumoniae (strain ATCC 29342 / M129 / Subtype 1) (Mycoplasmoides pneumoniae).